A 336-amino-acid chain; its full sequence is Fructose-1,6-bisphosphatase class 1 (336 aa).

4 residues coordinate Mg(2+): Glu90, Asp112, Leu114, and Asp115. Residues 115–118, Asn211, and Lys277 each bind substrate; that span reads DGSS. Glu283 contributes to the Mg(2+) binding site.

Belongs to the FBPase class 1 family. Homotetramer. Requires Mg(2+) as cofactor.

It is found in the cytoplasm. The enzyme catalyses beta-D-fructose 1,6-bisphosphate + H2O = beta-D-fructose 6-phosphate + phosphate. Its pathway is carbohydrate biosynthesis; gluconeogenesis. The protein is Fructose-1,6-bisphosphatase class 1 of Pseudomonas fluorescens (strain ATCC BAA-477 / NRRL B-23932 / Pf-5).